The chain runs to 322 residues: Phosphatidylserine decarboxylase proenzyme (322 aa).

Active-site charge relay system; for autoendoproteolytic cleavage activity residues include Asp-90, His-147, and Ser-254. Ser-254 functions as the Schiff-base intermediate with substrate; via pyruvic acid; for decarboxylase activity in the catalytic mechanism. Residue Ser-254 is modified to Pyruvic acid (Ser); by autocatalysis. The segment at Pro-293–Val-322 is disordered. A compositionally biased stretch (basic and acidic residues) spans Glu-308–Val-322.

It belongs to the phosphatidylserine decarboxylase family. PSD-B subfamily. Prokaryotic type I sub-subfamily. In terms of assembly, heterodimer of a large membrane-associated beta subunit and a small pyruvoyl-containing alpha subunit. The cofactor is pyruvate. Post-translationally, is synthesized initially as an inactive proenzyme. Formation of the active enzyme involves a self-maturation process in which the active site pyruvoyl group is generated from an internal serine residue via an autocatalytic post-translational modification. Two non-identical subunits are generated from the proenzyme in this reaction, and the pyruvate is formed at the N-terminus of the alpha chain, which is derived from the carboxyl end of the proenzyme. The autoendoproteolytic cleavage occurs by a canonical serine protease mechanism, in which the side chain hydroxyl group of the serine supplies its oxygen atom to form the C-terminus of the beta chain, while the remainder of the serine residue undergoes an oxidative deamination to produce ammonia and the pyruvoyl prosthetic group on the alpha chain. During this reaction, the Ser that is part of the protease active site of the proenzyme becomes the pyruvoyl prosthetic group, which constitutes an essential element of the active site of the mature decarboxylase.

Its subcellular location is the cell membrane. The catalysed reaction is a 1,2-diacyl-sn-glycero-3-phospho-L-serine + H(+) = a 1,2-diacyl-sn-glycero-3-phosphoethanolamine + CO2. Its pathway is phospholipid metabolism; phosphatidylethanolamine biosynthesis; phosphatidylethanolamine from CDP-diacylglycerol: step 2/2. Its function is as follows. Catalyzes the formation of phosphatidylethanolamine (PtdEtn) from phosphatidylserine (PtdSer). The polypeptide is Phosphatidylserine decarboxylase proenzyme (Escherichia coli O127:H6 (strain E2348/69 / EPEC)).